The chain runs to 131 residues: Period circadian protein (131 aa).

Residues 29-109 (VTAPVELDPP…NSAGGASGGV (81 aa)) form a disordered region. Over residues 71–93 (SGNFTTGSNVRMSSVTNTSNAGT) the composition is skewed to low complexity. A compositionally biased stretch (gly residues) spans 94-109 (GTSGGGNSAGGASGGV).

As to quaternary structure, forms a heterodimer with timeless (TIM); the complex then translocates into the nucleus. In terms of processing, phosphorylated with a circadian rhythmicity, probably by the double-time protein (dbt). Phosphorylation could be implicated in the stability of per monomer and in the formation of heterodimer per-tim.

The protein resides in the nucleus. The protein localises to the cytoplasm. It localises to the perinuclear region. In terms of biological role, essential for biological clock functions. Determines the period length of circadian and ultradian rhythms; an increase in PER dosage leads to shortened circadian rhythms and a decrease leads to lengthened circadian rhythms. Essential for the circadian rhythmicity of locomotor activity, eclosion behavior, and for the rhythmic component of the male courtship song that originates in the thoracic nervous system. The biological cycle depends on the rhythmic formation and nuclear localization of the TIM-PER complex. Light induces the degradation of TIM, which promotes elimination of PER. Nuclear activity of the heterodimer coordinatively regulates PER and TIM transcription through a negative feedback loop. Behaves as a negative element in circadian transcriptional loop. Does not appear to bind DNA, suggesting indirect transcriptional inhibition. The protein is Period circadian protein (per) of Zaprionus tuberculatus (Vinegar fly).